The primary structure comprises 32 residues: Alcohol dehydrogenase-related 31 kDa protein (32 aa).

Residue 11–32 (YVADCGGIALETSXVLMTKNIA) participates in NAD(+) binding.

It belongs to the short-chain dehydrogenases/reductases (SDR) family.

This is Alcohol dehydrogenase-related 31 kDa protein (Adhr) from Drosophila yakuba (Fruit fly).